Reading from the N-terminus, the 267-residue chain is Putative F-box protein At1g61060 (267 aa).

One can recognise an F-box domain in the interval 15–63 (DYFDAIHVDLFTAKILSKLPVKSIAQCRCVSKLWSSQIRRPYYNMLFPI).

The protein is Putative F-box protein At1g61060 of Arabidopsis thaliana (Mouse-ear cress).